The primary structure comprises 256 residues: uncharacterized protein (256 aa).

The signal sequence occupies residues 1 to 22 (MGYLKRFALYISVMILIFAIAG). The N-palmitoyl cysteine moiety is linked to residue C23. C23 is lipidated: S-diacylglycerol cysteine.

Belongs to the staphylococcal tandem lipoprotein family.

The protein localises to the cell membrane. This is an uncharacterized protein from Staphylococcus aureus (strain COL).